A 205-amino-acid chain; its full sequence is MSIKYVATSKLPTPWGVFAMHGFEDTETGKEHVALTFGELDASQPILGRIHSECLTGDALFSLRCDCGFQLQTAMQNIAEAGQGFILYLRQEGRGIGLLNKIRAYELQDQGANTVEANERLGFAADMRKYDMIKPMLEKIGVQQVKLMTNNPRKVKAMKELGIAVIERVPLQVGKNRYNEAYLKTKSTELGHMMSEYHFTEEHQD.

Residue 49-53 (RIHSE) coordinates GTP. The Zn(2+) site is built by cysteine 54, cysteine 65, and cysteine 67. Residues glutamine 70, 92-94 (EGR), and threonine 114 contribute to the GTP site. Aspartate 126 functions as the Proton acceptor in the catalytic mechanism. The Nucleophile role is filled by arginine 128. Positions 149 and 154 each coordinate GTP.

This sequence belongs to the GTP cyclohydrolase II family. Zn(2+) serves as cofactor.

The catalysed reaction is GTP + 4 H2O = 2,5-diamino-6-hydroxy-4-(5-phosphoribosylamino)-pyrimidine + formate + 2 phosphate + 3 H(+). It participates in cofactor biosynthesis; riboflavin biosynthesis; 5-amino-6-(D-ribitylamino)uracil from GTP: step 1/4. Catalyzes the conversion of GTP to 2,5-diamino-6-ribosylamino-4(3H)-pyrimidinone 5'-phosphate (DARP), formate and pyrophosphate. The chain is GTP cyclohydrolase-2 from Shewanella loihica (strain ATCC BAA-1088 / PV-4).